The chain runs to 377 residues: Compound eye opsin BCRH1 (377 aa).

Residues 1–53 (MANVTGPQMAFYGSGAATFGYPEGMTVADFVPDRVKHMVLDHWYNYPPVNPMW) lie on the Extracellular side of the membrane. Asn3 is a glycosylation site (N-linked (GlcNAc...) asparagine). A helical transmembrane segment spans residues 54-78 (HYLLGVVYLFLGVISIAGNGLVIYL). Residues 79–90 (YMKSQALKTPAN) lie on the Cytoplasmic side of the membrane. The helical transmembrane segment at 91-115 (MLIVNLALSDLIMLTTNFPPFCYNC) threads the bilayer. The Extracellular segment spans residues 116 to 131 (FSGGRWMFSGTYCEIY). Cys128 and Cys205 form a disulfide bridge. The chain crosses the membrane as a helical span at residues 132–151 (AALGAITGVCSIWTLCMISF). The Cytoplasmic segment spans residues 152 to 170 (DRYNIICNGFNGPKLTQGK). The chain crosses the membrane as a helical span at residues 171–194 (ATFMCGLAWVISVGWSLPPFFGWG). Topologically, residues 195–218 (SYTLEGILDSCSYDYFTRDMNTIT) are extracellular. The chain crosses the membrane as a helical span at residues 219-246 (YNICIFIFDFFLPASVIVFSYVFIVKAI). The Cytoplasmic portion of the chain corresponds to 247 to 281 (FAHEAAMRAQAKKMNVTNLRSNEAETQRAEIRIAK). A helical transmembrane segment spans residues 282–305 (TALVNVSLWFICWTPYAAITIQGL). Residues 306 to 313 (LGNAEGIT) lie on the Extracellular side of the membrane. Residues 314–338 (PLLTTLPALLAKSCSCYNPFVYAIS) form a helical membrane-spanning segment. Lys325 carries the post-translational modification N6-(retinylidene)lysine. At 339–377 (HPKFRLAITQHLPWFCVHEKDPNDVEENQSSNTQTQEKS) the chain is on the cytoplasmic side.

This sequence belongs to the G-protein coupled receptor 1 family. Opsin subfamily. In terms of processing, phosphorylated on some or all of the serine and threonine residues present in the C-terminal region. As to expression, expressed in all of the seven retinular cells (R1-R7) forming the main rhabdom in each ommatidium.

The protein localises to the membrane. Its function is as follows. Visual pigments are the light-absorbing molecules that mediate vision. They consist of an apoprotein, opsin, covalently linked to cis-retinal. This opsin produces visual pigments with maximal absorption in the blue-green region of the spectrum. This Hemigrapsus sanguineus (Asian shore crab) protein is Compound eye opsin BCRH1.